Reading from the N-terminus, the 160-residue chain is Ribosome maturation factor RimP (160 aa).

This sequence belongs to the RimP family.

Its subcellular location is the cytoplasm. Functionally, required for maturation of 30S ribosomal subunits. The protein is Ribosome maturation factor RimP of Cronobacter sakazakii (strain ATCC BAA-894) (Enterobacter sakazakii).